A 454-amino-acid polypeptide reads, in one-letter code: Cobyrinate a,c-diamide synthase (454 aa).

Positions 244-435 constitute a GATase cobBQ-type domain; sequence KIAVAYDSAF…VHIHFLSNIA (192 aa). Residue cysteine 327 is the Nucleophile of the active site.

It belongs to the CobB/CbiA family. It depends on Mg(2+) as a cofactor.

It carries out the reaction cob(II)yrinate + 2 L-glutamine + 2 ATP + 2 H2O = cob(II)yrinate a,c diamide + 2 L-glutamate + 2 ADP + 2 phosphate + 2 H(+). It participates in cofactor biosynthesis; adenosylcobalamin biosynthesis; cob(II)yrinate a,c-diamide from sirohydrochlorin (anaerobic route): step 10/10. Its function is as follows. Catalyzes the ATP-dependent amidation of the two carboxylate groups at positions a and c of cobyrinate, using either L-glutamine or ammonia as the nitrogen source. This Thermoplasma volcanium (strain ATCC 51530 / DSM 4299 / JCM 9571 / NBRC 15438 / GSS1) protein is Cobyrinate a,c-diamide synthase.